The primary structure comprises 376 residues: DNA-directed RNA polymerase subunit alpha (376 aa).

Positions 1-259 are alpha N-terminal domain (alpha-NTD); that stretch reads MSDNSQNLLY…KHFSIFEKMD (259 aa). An alpha C-terminal domain (alpha-CTD) region spans residues 276 to 376; sequence KDDILHKLVL…EKIRSKNVKG (101 aa).

It belongs to the RNA polymerase alpha chain family. As to quaternary structure, homodimer. The RNAP catalytic core consists of 2 alpha, 1 beta, 1 beta' and 1 omega subunit. When a sigma factor is associated with the core the holoenzyme is formed, which can initiate transcription.

The enzyme catalyses RNA(n) + a ribonucleoside 5'-triphosphate = RNA(n+1) + diphosphate. Its function is as follows. DNA-dependent RNA polymerase catalyzes the transcription of DNA into RNA using the four ribonucleoside triphosphates as substrates. The polypeptide is DNA-directed RNA polymerase subunit alpha (Chlamydia felis (strain Fe/C-56) (Chlamydophila felis)).